The sequence spans 99 residues: Meromycolate extension acyl carrier protein (99 aa).

The Carrier domain maps to 3–81 (ATQEEIIAGL…DVVAYIQKLE (79 aa)). An O-(pantetheine 4'-phosphoryl)serine modification is found at S41. K79 is covalently cross-linked (Isoglutamyl lysine isopeptide (Lys-Gln) (interchain with Q-Cter in protein Pup)).

The protein belongs to the acyl carrier protein (ACP) family. 4'-phosphopantetheine is transferred from CoA to a specific serine of apo-AcpM.

It localises to the cytoplasm. In terms of biological role, acyl carrier protein involved in meromycolate extension. This chain is Meromycolate extension acyl carrier protein (acpM), found in Mycolicibacterium smegmatis (strain ATCC 700084 / mc(2)155) (Mycobacterium smegmatis).